The primary structure comprises 121 residues: Large ribosomal subunit protein uL14c (121 aa).

Belongs to the universal ribosomal protein uL14 family. Part of the 50S ribosomal subunit.

It is found in the plastid. Its subcellular location is the apicoplast. Functionally, binds to 23S rRNA. This Eimeria tenella (Coccidian parasite) protein is Large ribosomal subunit protein uL14c (rpl14).